The chain runs to 427 residues: Serine--tRNA ligase (427 aa).

231–233 serves as a coordination point for L-serine; sequence TAE. 262-264 contributes to the ATP binding site; that stretch reads RSE. Glu285 is an L-serine binding site. Residue 349–352 coordinates ATP; that stretch reads EISS. Ser385 serves as a coordination point for L-serine.

This sequence belongs to the class-II aminoacyl-tRNA synthetase family. Type-1 seryl-tRNA synthetase subfamily. Homodimer. The tRNA molecule binds across the dimer.

The protein resides in the cytoplasm. The enzyme catalyses tRNA(Ser) + L-serine + ATP = L-seryl-tRNA(Ser) + AMP + diphosphate + H(+). The catalysed reaction is tRNA(Sec) + L-serine + ATP = L-seryl-tRNA(Sec) + AMP + diphosphate + H(+). It participates in aminoacyl-tRNA biosynthesis; selenocysteinyl-tRNA(Sec) biosynthesis; L-seryl-tRNA(Sec) from L-serine and tRNA(Sec): step 1/1. Catalyzes the attachment of serine to tRNA(Ser). Is also able to aminoacylate tRNA(Sec) with serine, to form the misacylated tRNA L-seryl-tRNA(Sec), which will be further converted into selenocysteinyl-tRNA(Sec). The polypeptide is Serine--tRNA ligase (Listeria welshimeri serovar 6b (strain ATCC 35897 / DSM 20650 / CCUG 15529 / CIP 8149 / NCTC 11857 / SLCC 5334 / V8)).